The sequence spans 1052 residues: Mitotic checkpoint serine/threonine-protein kinase BUB1 beta (1052 aa).

Residues 56-219 (FESEIRFYSG…LEPSEPQRSS (164 aa)) form the BUB1 N-terminal domain. Residues 105–112 (GETRYYND) carry the Nuclear localization signal motif. Positions 146-179 (AQFYISWAEEYEARENFKKADIIFQEGIERKAEP) are necessary for interaction with KNL1. Disordered regions lie at residues 206 to 256 (EEEA…NAVP) and 272 to 327 (ADTA…TSIP). Positions 217–225 (RSSLAELKS) match the D-box motif. Lysine 243 carries the post-translational modification N6-acetyllysine; by PCAF. Phosphoserine is present on serine 360. Residues 361-381 (TRKPGREEGDPLQRVQSHQQG) are disordered. Serine 428 carries the phosphoserine modification. The segment at 496–552 (SNPREISPAENILQEQPDSKGSSMPFSIFDESLSDKKDKSPATGGPQVLNAQRRPLS) is disordered. Residues 508–520 (LQEQPDSKGSSMP) are compositionally biased toward polar residues. Phosphoserine is present on residues serine 535 and serine 659. Serine 665 is subject to Phosphoserine; by PLK1. At serine 686 the chain carries Phosphoserine. A Protein kinase domain is found at 756–1040 (VIKQEHLTCD…TISPEALLTQ (285 aa)). 762-770 (LTCDDYRLF) contributes to the ATP binding site. Threonine 781 bears the Phosphothreonine; by PLK1 mark. Residue lysine 784 coordinates ATP. Catalysis depends on aspartate 871, which acts as the Proton acceptor. A Phosphothreonine; by PLK1 modification is found at threonine 998. 2 positions are modified to phosphoserine: serine 1033 and serine 1050.

This sequence belongs to the protein kinase superfamily. Ser/Thr protein kinase family. BUB1 subfamily. In terms of assembly, interacts with CENPE. Interacts with PLK1. Part of a complex containing BUB3, CDC20 and BUB1B. Interacts with anaphase-promoting complex/cyclosome (APC/C). Interacts with KNL1. Interacts with KAT2B. Interacts with RIPK3. Interacts with the closed conformation form of MAD2L1. Interacts with CDC20. In terms of processing, proteolytically cleaved by caspase-3 in a cell cycle specific manner. The cleavage might be involved in the durability of the cell cycle delay. Post-translationally, acetylation at Lys-243 regulates its degradation and timing in anaphase entry. Ubiquitinated. Degraded by the proteasome. Ubiquitinated by UBR5, promoting disassembly of the mitotic checkpoint complex from the APC/C complex. In terms of processing, sumoylated with SUMO2 and SUMO3. The sumoylation mediates the association with CENPE at the kinetochore. Post-translationally, autophosphorylated in vitro. Intramolecular autophosphorylation stimulated by CENPE. Phosphorylated during mitosis and hyperphosphorylated in mitotically arrested cells. Phosphorylation at Ser-659 and Ser-1033 occurs at kinetochores upon mitotic entry with dephosphorylation at the onset of anaphase. Proteolytically cleaved by caspase-3 in a cell cycle specific manner. The cleavage might be involved in the durability of the cell cycle delay. Caspase-3 cleavage is associated with abrogation of the mitotic checkpoint. The major site of cleavage is at Asp-603. In terms of tissue distribution, highly expressed in thymus followed by spleen.

Its subcellular location is the cytoplasm. It localises to the nucleus. The protein localises to the chromosome. It is found in the centromere. The protein resides in the kinetochore. It catalyses the reaction L-seryl-[protein] + ATP = O-phospho-L-seryl-[protein] + ADP + H(+). The enzyme catalyses L-threonyl-[protein] + ATP = O-phospho-L-threonyl-[protein] + ADP + H(+). Kinase activity stimulated by CENPE. In terms of biological role, essential component of the mitotic checkpoint. Required for normal mitosis progression and tumor suppression. The mitotic checkpoint delays anaphase until all chromosomes are properly attached to the mitotic spindle. One of its checkpoint functions is to inhibit the activity of the anaphase-promoting complex/cyclosome (APC/C) by blocking the binding of CDC20 to APC/C, independently of its kinase activity. The other is to monitor kinetochore activities that depend on the kinetochore motor CENPE. Required for kinetochore localization of CENPE. Negatively regulates PLK1 activity in interphase cells and suppresses centrosome amplification. Also implicated in triggering apoptosis in polyploid cells that exit aberrantly from mitotic arrest. Essential for tumor suppression. May play a role in regulating aging and fertility. The chain is Mitotic checkpoint serine/threonine-protein kinase BUB1 beta (Bub1b) from Mus musculus (Mouse).